A 519-amino-acid polypeptide reads, in one-letter code: Cytochrome P450 72C1 (519 aa).

Residues 10–30 (VFLIGFLILILNWVWRAVNWV) form a helical membrane-spanning segment. Cys-467 lines the heme pocket.

Belongs to the cytochrome P450 family. Heme serves as cofactor. In terms of tissue distribution, expressed in hypocotyls, roots, cotyledons, stamens and silique junctions.

It localises to the membrane. Atypical cytochrome P450 involved in brassinosteroids (BRs) inactivation and regulation of BRs homeostasis. Does not possess carbon 26 hydroxylase activity and may inactivate BRs by hydroxylation of carbons other than C-26. Acts in association with CYP734A1 to inactivate BRs and modulate photomorphogenesis. The protein is Cytochrome P450 72C1 (CYP72C1) of Arabidopsis thaliana (Mouse-ear cress).